Here is a 239-residue protein sequence, read N- to C-terminus: MKLSTIFTAFAATIATVAGYETTGSKQTVDILIDYIIKETPELSQNDVANWENGDTVTLQYVVNNNEESEITVVGVTGQFKNPINNEIVTNLTTGKVGPIAVPPGEAIKFDQKINVDLIPANYELIPHVFIAQDSLIKVIPCRGQLATIVDAAVSFFDPRLIFLELVLLITFAGLIYVGYEIWGKQYFKGVAPVKAKKVSAAKASSPVATGPSTTSATGYDTNWIPESHLKQKKTKKVN.

Positions Met1–Gly19 are cleaved as a signal peptide. The Lumenal segment spans residues Tyr20–Leu161. Residues Ile162–Ile182 traverse the membrane as a helical segment. The Cytoplasmic segment spans residues Trp183–Asn239. Residues Ala202–Thr222 are disordered. Residues Gly211–Asp221 are compositionally biased toward polar residues.

This sequence belongs to the IRC22 family.

It localises to the endoplasmic reticulum membrane. Its function is as follows. Is probably involved in a pathway contributing to genomic integrity. This is Increased recombination centers protein 22-2 (IRC22-2) from Candida albicans (strain SC5314 / ATCC MYA-2876) (Yeast).